The following is a 656-amino-acid chain: Pentatricopeptide repeat-containing protein At1g62260, mitochondrial (656 aa).

PPR repeat units lie at residues 70–104, 105–134, 135–169, 170–200, 203–227, 234–264, 280–310, 311–345, 346–372, 373–407, 408–438, 442–472, 474–508, 509–544, and 545–575; these read NTVT…DVVT, WNTM…MPSR, DSFS…NAVS, WSAM…DSSP, ALVA…YGSL, LVYA…IPDL, NVVS…MKDR, DTIS…DAHS, WNMM…TPEK, HTVS…GEKP, DPHT…VVKT, DVPV…MKLK, EVIT…GIYP, SHIT…KIEP, and QMEH…MPFE. The tract at residues 580-655 is type E motif; the sequence is VWGALLDACR…ERGSSWVDSS (76 aa).

It belongs to the PPR family. PCMP-E subfamily.

The protein resides in the mitochondrion. The protein is Pentatricopeptide repeat-containing protein At1g62260, mitochondrial (PCMP-E10) of Arabidopsis thaliana (Mouse-ear cress).